A 101-amino-acid polypeptide reads, in one-letter code: NAD(P)H-quinone oxidoreductase subunit 4L, chloroplastic (101 aa).

Transmembrane regions (helical) follow at residues 2–22 (MLEH…YGLI), 32–52 (MCLE…SDFF), and 61–81 (IFSI…LAIV).

Belongs to the complex I subunit 4L family. In terms of assembly, NDH is composed of at least 16 different subunits, 5 of which are encoded in the nucleus.

It is found in the plastid. It localises to the chloroplast thylakoid membrane. It catalyses the reaction a plastoquinone + NADH + (n+1) H(+)(in) = a plastoquinol + NAD(+) + n H(+)(out). The catalysed reaction is a plastoquinone + NADPH + (n+1) H(+)(in) = a plastoquinol + NADP(+) + n H(+)(out). Its function is as follows. NDH shuttles electrons from NAD(P)H:plastoquinone, via FMN and iron-sulfur (Fe-S) centers, to quinones in the photosynthetic chain and possibly in a chloroplast respiratory chain. The immediate electron acceptor for the enzyme in this species is believed to be plastoquinone. Couples the redox reaction to proton translocation, and thus conserves the redox energy in a proton gradient. The sequence is that of NAD(P)H-quinone oxidoreductase subunit 4L, chloroplastic from Guizotia abyssinica (Niger).